The primary structure comprises 129 residues: Histone H2A-III (129 aa).

A disordered region spans residues 1 to 22 (MSGRGKQGGKARAKAKSRSSRA). N-acetylserine is present on Ser-2. Ser-2 carries the phosphoserine modification. At Lys-6 the chain carries N6-(2-hydroxyisobutyryl)lysine. An N6-acetyllysine mark is found at Lys-6 and Lys-10. The segment covering 7–19 (QGGKARAKAKSRS) has biased composition (basic residues). At Lys-10 the chain carries N6-(2-hydroxyisobutyryl)lysine; alternate. Lys-10 is modified (N6-lactoyllysine; alternate). At Lys-10 the chain carries N6-succinyllysine. Glycyl lysine isopeptide (Lys-Gly) (interchain with G-Cter in ubiquitin) cross-links involve residues Lys-14 and Lys-16. Lys-37 bears the N6-(2-hydroxyisobutyryl)lysine; alternate mark. 2 positions are modified to N6-(2-hydroxyisobutyryl)lysine: Lys-75 and Lys-76. An N6-(2-hydroxyisobutyryl)lysine; alternate modification is found at Lys-96. The residue at position 96 (Lys-96) is an N6-succinyllysine. Lys-96 bears the N6-glutaryllysine; alternate mark. Lys-100 carries the N6-glutaryllysine modification. An N5-methylglutamine modification is found at Gln-105. Position 119 is an N6-(2-hydroxyisobutyryl)lysine; alternate (Lys-119). N6-glutaryllysine; alternate is present on residues Lys-119 and Lys-120. Residue Lys-120 forms a Glycyl lysine isopeptide (Lys-Gly) (interchain with G-Cter in ubiquitin) linkage.

This sequence belongs to the histone H2A family. In terms of assembly, the nucleosome is a histone octamer containing two molecules each of H2A, H2B, H3 and H4 assembled in one H3-H4 heterotetramer and two H2A-H2B heterodimers. The octamer wraps approximately 147 bp of DNA. In terms of processing, monoubiquitination of Lys-120 (H2AK119Ub) gives a specific tag for epigenetic transcriptional repression. Following DNA double-strand breaks (DSBs), it is ubiquitinated through 'Lys-63' linkage of ubiquitin moieties, leading to the recruitment of repair proteins to sites of DNA damage. H2AK119Ub and ionizing radiation-induced 'Lys-63'-linked ubiquitination are distinct events. Phosphorylation on Ser-2 is enhanced during mitosis. Phosphorylation on Ser-2 directly represses transcription. Post-translationally, glutamine methylation at Gln-105 (H2AQ104me) by FBL is specifically dedicated to polymerase I. It is present at 35S ribosomal DNA locus and impairs binding of the FACT complex.

Its subcellular location is the nucleus. It is found in the chromosome. Its function is as follows. Core component of nucleosome. Nucleosomes wrap and compact DNA into chromatin, limiting DNA accessibility to the cellular machineries which require DNA as a template. Histones thereby play a central role in transcription regulation, DNA repair, DNA replication and chromosomal stability. DNA accessibility is regulated via a complex set of post-translational modifications of histones, also called histone code, and nucleosome remodeling. This is Histone H2A-III from Gallus gallus (Chicken).